The primary structure comprises 288 residues: tRNA-cytidine(32) 2-sulfurtransferase (288 aa).

The PP-loop motif motif lies at 70-75 (SGGKDS). Residues Cys-145, Cys-148, and Cys-236 each contribute to the [4Fe-4S] cluster site.

It belongs to the TtcA family. In terms of assembly, homodimer. The cofactor is Mg(2+). Requires [4Fe-4S] cluster as cofactor.

It localises to the cytoplasm. The catalysed reaction is cytidine(32) in tRNA + S-sulfanyl-L-cysteinyl-[cysteine desulfurase] + AH2 + ATP = 2-thiocytidine(32) in tRNA + L-cysteinyl-[cysteine desulfurase] + A + AMP + diphosphate + H(+). It functions in the pathway tRNA modification. Functionally, catalyzes the ATP-dependent 2-thiolation of cytidine in position 32 of tRNA, to form 2-thiocytidine (s(2)C32). The sulfur atoms are provided by the cysteine/cysteine desulfurase (IscS) system. The polypeptide is tRNA-cytidine(32) 2-sulfurtransferase (Bartonella tribocorum (strain CIP 105476 / IBS 506)).